The sequence spans 224 residues: Fibrillarin-like rRNA/tRNA 2'-O-methyltransferase (224 aa).

Residues 82 to 83 (TT), 100 to 101 (EF), 125 to 126 (DA), and 145 to 148 (DVAQ) each bind S-adenosyl-L-methionine.

The protein belongs to the methyltransferase superfamily. Fibrillarin family. As to quaternary structure, interacts with nop5. Component of box C/D small ribonucleoprotein (sRNP) particles that contain rpl7ae, FlpA and nop5, plus a guide RNA.

In terms of biological role, involved in pre-rRNA and tRNA processing. Utilizes the methyl donor S-adenosyl-L-methionine to catalyze the site-specific 2'-hydroxyl methylation of ribose moieties in rRNA and tRNA. Site specificity is provided by a guide RNA that base pairs with the substrate. Methylation occurs at a characteristic distance from the sequence involved in base pairing with the guide RNA. This is Fibrillarin-like rRNA/tRNA 2'-O-methyltransferase from Methanothermobacter thermautotrophicus (strain ATCC 29096 / DSM 1053 / JCM 10044 / NBRC 100330 / Delta H) (Methanobacterium thermoautotrophicum).